The following is an 836-amino-acid chain: General vesicular transport factor p115 (836 aa).

The segment at 1 to 22 (MEFLKSGIKTVLGSTEPGQQPS) is disordered. Over residues 12-22 (LGSTEPGQQPS) the composition is skewed to polar residues. ARM repeat units lie at residues 24-64 (AETV…VGAQ), 65-124 (GMPP…IKTP), 126-166 (HVTL…LILV), 169-210 (MGVS…VAFE), 211-256 (NAFD…FKEG), 316-359 (RLLH…LGRV), 368-413 (PAIV…QTLL), 424-463 (STGQLLCTGLFSTDALANWFSAVALMHSLVENVALKEELL), 477-518 (TLLE…KALL), 523-577 (TMAY…IIKR), and 579-636 (GQES…LVSG). Coiled coils occupy residues 663–707 (IIRG…DQNT) and 744–806 (NMYF…EEAG). Positions 803-836 (EEAGSTNTLPTSNVAPSVPAAGGGSPIPSGTASR) are disordered. Residues 806–816 (GSTNTLPTSNV) are compositionally biased toward polar residues. Low complexity predominate over residues 817 to 836 (APSVPAAGGGSPIPSGTASR).

This sequence belongs to the VDP/USO1/EDE1 family.

It is found in the cytoplasm. The protein resides in the golgi apparatus. It localises to the golgi stack. The protein localises to the golgi stack membrane. Its subcellular location is the endoplasmic reticulum. It is found in the endoplasmic reticulum membrane. In terms of biological role, essential for maintaining the architecture of the Golgi stacks and for normal organization of the transitional endoplasmic reticulum (tER). Required for both the formation of the Golgi stacks and the maintenance of the individual cisternae. This is General vesicular transport factor p115 from Drosophila melanogaster (Fruit fly).